Consider the following 189-residue polypeptide: Glucose-6-phosphate isomerase (189 aa).

4 residues coordinate Fe cation: histidine 88, histidine 90, glutamate 97, and histidine 136.

It belongs to the archaeal-type GPI family. Homodimer. Fe cation serves as cofactor.

The protein resides in the cytoplasm. It catalyses the reaction alpha-D-glucose 6-phosphate = beta-D-fructose 6-phosphate. The protein operates within carbohydrate degradation; glycolysis; D-glyceraldehyde 3-phosphate and glycerone phosphate from D-glucose: step 2/4. This chain is Glucose-6-phosphate isomerase (pgiA), found in Pyrococcus abyssi (strain GE5 / Orsay).